The following is a 137-amino-acid chain: Large ribosomal subunit protein eL28 (137 aa).

Serine 2 is subject to N-acetylserine. Glycyl lysine isopeptide (Lys-Gly) (interchain with G-Cter in SUMO2) cross-links involve residues lysine 58 and lysine 65. A Phosphoserine modification is found at serine 115.

This sequence belongs to the eukaryotic ribosomal protein eL28 family. In terms of assembly, component of the large ribosomal subunit.

It localises to the cytoplasm. Functionally, component of the large ribosomal subunit. The ribosome is a large ribonucleoprotein complex responsible for the synthesis of proteins in the cell. This Homo sapiens (Human) protein is Large ribosomal subunit protein eL28 (RPL28).